We begin with the raw amino-acid sequence, 344 residues long: L-rhamnose-proton symporter (344 aa).

A run of 10 helical transmembrane segments spans residues 4-24 (AITM…CFYA), 38-58 (WSVG…ATLL), 72-92 (TLLP…NYGL), 101-121 (MGIG…TPII), 131-151 (TQGG…VGIV), 175-195 (LLLA…MNAA), 214-234 (LPSY…FCFI), 259-279 (LLLS…YAWG), 290-310 (MSWM…GLVL), and 323-343 (VLSL…LGMA).

The protein belongs to the L-rhamnose transporter (TC 2.A.7.6) family.

Its subcellular location is the cell inner membrane. It catalyses the reaction L-rhamnopyranose(in) + H(+)(in) = L-rhamnopyranose(out) + H(+)(out). Functionally, uptake of L-rhamnose across the cytoplasmic membrane with the concomitant transport of protons into the cell (symport system). In Klebsiella pneumoniae (strain 342), this protein is L-rhamnose-proton symporter.